The sequence spans 455 residues: MISVFDIFKIGIGPSSSHTVGPMKAGKQFTDDLIARNLLKDVTRVVVDVYGSLSLTGKGHHTDIAIIMGLAGNLPDTVDIDSIPSFIQDVNTHGRLMLANGQHEVEFPVDQCMNFHADNLSLHENGMRITALAGDKVVYSQTYYSIGGGFIVDEEHFGQQDSAPVEVPYPYSSAADLQKHCQETGLSLSGLMMKNELALHSKEELEQHLANVWEVMRGGIERGISTEGVLPGKLRVPRRAAALRRMLVSQDKTTTDPMAVVDWINMFALAVNEENAAGGRVVTAPTNGACGIIPAVLAYYDKFIREVNANSLARYLLVASAIGSLYKMNASISGAEVGCQGEVGVACSMAAAGLAELLGASPAQVCIAAEIAMEHNLGLTCDPVAGQVQVPCIERNAIAAVKAVNAARMALRRTSEPRVCLDKVIETMYETGKDMNAKYRETSRGGLAMKIVACD.

The protein belongs to the iron-sulfur dependent L-serine dehydratase family. [4Fe-4S] cluster serves as cofactor. Activated by post-translational modification by a system involving at least three gene products. Activation is mimicked in vitro by iron and dithiothreitol. There is considerable evidence for a free-radical activation mechanism.

The catalysed reaction is L-serine = pyruvate + NH4(+). The protein operates within carbohydrate biosynthesis; gluconeogenesis. Its function is as follows. Also deaminates threonine, particularly when it is present in high concentration. This chain is L-serine dehydratase 2 (sdaB), found in Escherichia coli (strain K12).